The primary structure comprises 328 residues: RNA binding protein fox-1 homolog 3 (328 aa).

The span at 1-30 shows a compositional bias: pro residues; sequence MAQPYPPAQYPPPPQNGIPAEYAPPPPHPT. The interval 1–106 is disordered; that stretch reads MAQPYPPAQY…QPKRLHVSNI (106 aa). Residues 49–87 show a composition bias toward polar residues; the sequence is TPAQTHPEQPSSDTSTQPITGAQTVPQTDEAAQTDSQPL. In terms of domain architecture, RRM spans 99 to 172; it reads KRLHVSNIPF…NPVVGAVYGP (74 aa). Asymmetric dimethylarginine; alternate is present on R192. The residue at position 192 (R192) is an Omega-N-methylarginine; alternate. R288 bears the Asymmetric dimethylarginine mark.

It is found in the nucleus. The protein localises to the cytoplasm. In terms of biological role, pre-mRNA alternative splicing regulator. Regulates alternative splicing of RBFOX2 to enhance the production of mRNA species that are targeted for nonsense-mediated decay (NMD). The polypeptide is RNA binding protein fox-1 homolog 3 (RBFOX3) (Bos taurus (Bovine)).